The following is a 1229-amino-acid chain: Alpha,alpha-trehalose-phosphate synthase [UDP-forming] 2 (1229 aa).

The tract at residues 196 to 233 is disordered; it reads VSSDSEGEEAIHNVRSGTHTESESEEDPKAPRSGLATS. Residues 213–225 are compositionally biased toward basic and acidic residues; that stretch reads THTESESEEDPKA.

The protein in the N-terminal section; belongs to the glycosyltransferase 20 family. This sequence in the C-terminal section; belongs to the gob-1 trehalose phosphatase family.

It carries out the reaction D-glucose 6-phosphate + UDP-alpha-D-glucose = alpha,alpha-trehalose 6-phosphate + UDP + H(+). Catalyzes the production of trehalose from glucose-6-phosphate and UDP-alpha-D-glucose in a 2 step process. The chain is Alpha,alpha-trehalose-phosphate synthase [UDP-forming] 2 (tps-2) from Caenorhabditis elegans.